We begin with the raw amino-acid sequence, 117 residues long: Large ribosomal subunit protein uL18 (117 aa).

The protein belongs to the universal ribosomal protein uL18 family. In terms of assembly, part of the 50S ribosomal subunit; part of the 5S rRNA/L5/L18/L25 subcomplex. Contacts the 5S and 23S rRNAs.

Functionally, this is one of the proteins that bind and probably mediate the attachment of the 5S RNA into the large ribosomal subunit, where it forms part of the central protuberance. The chain is Large ribosomal subunit protein uL18 from Pseudoalteromonas atlantica (strain T6c / ATCC BAA-1087).